The primary structure comprises 430 residues: Lipoyl synthase, mitochondrial (430 aa).

Residues 1 to 37 constitute a mitochondrion transit peptide; that stretch reads MATSAGKLRTLYSAHSSLSSLPPSARPTLQLATLRSY. Polar residues predominate over residues 39-55; sequence TTTPHDSPIGNTSNTPP. A disordered region spans residues 39–59; the sequence is TTTPHDSPIGNTSNTPPTVKR. Residues Cys141, Cys146, Cys152, Cys172, Cys176, Cys179, and Ser387 each contribute to the [4Fe-4S] cluster site. The region spanning 155 to 376 is the Radical SAM core domain; sequence GSSKSAATAT…KERALEMGFL (222 aa).

Belongs to the radical SAM superfamily. Lipoyl synthase family. [4Fe-4S] cluster is required as a cofactor.

It localises to the mitochondrion. It carries out the reaction [[Fe-S] cluster scaffold protein carrying a second [4Fe-4S](2+) cluster] + N(6)-octanoyl-L-lysyl-[protein] + 2 oxidized [2Fe-2S]-[ferredoxin] + 2 S-adenosyl-L-methionine + 4 H(+) = [[Fe-S] cluster scaffold protein] + N(6)-[(R)-dihydrolipoyl]-L-lysyl-[protein] + 4 Fe(3+) + 2 hydrogen sulfide + 2 5'-deoxyadenosine + 2 L-methionine + 2 reduced [2Fe-2S]-[ferredoxin]. Its pathway is protein modification; protein lipoylation via endogenous pathway; protein N(6)-(lipoyl)lysine from octanoyl-[acyl-carrier-protein]: step 2/2. Catalyzes the radical-mediated insertion of two sulfur atoms into the C-6 and C-8 positions of the octanoyl moiety bound to the lipoyl domains of lipoate-dependent enzymes, thereby converting the octanoylated domains into lipoylated derivatives. The chain is Lipoyl synthase, mitochondrial from Ajellomyces capsulatus (strain H143) (Darling's disease fungus).